The sequence spans 86 residues: Neuropeptide-like 2 (86 aa).

The signal sequence occupies residues Met-1 to Ser-19. 2 consecutive propeptides follow at residues Ala-20–Leu-34 and Ile-45–Thr-86.

Hemolymph (at protein level).

It is found in the secreted. The sequence is that of Neuropeptide-like 2 (Nplp2) from Drosophila melanogaster (Fruit fly).